The chain runs to 729 residues: Neurochondrin (729 aa).

An N-acetylserine modification is found at S2. At S2 the chain carries Phosphoserine. Residues C3 and C4 are each lipidated (S-palmitoyl cysteine). Residue R75 is modified to Asymmetric dimethylarginine. A Phosphoserine modification is found at S448.

It belongs to the neurochondrin family. Interacts with MCHR1. Interacts with SEMA4C. Interacts with DIAPH1 (via FH3 domain). Interacts with GRM5. In terms of processing, palmitoylated. Palmitoylation by ZDHHC1, ZDHHC3 and ZDHHC11 regulates the association of NCDN with endosome membranes. May also be palmitoylated by ZDHHC7. In terms of tissue distribution, expressed in brain and in peripheral nervous system (at protein level). Weakly expressed in neurites.

It is found in the cytoplasm. The protein resides in the cytosol. The protein localises to the endosome membrane. It localises to the cell projection. Its subcellular location is the dendrite. It is found in the postsynapse. In terms of biological role, probably involved in signal transduction, in the nervous system, via increasing cell surface localization of GRM5 and positively regulating its signaling. Required for the spatial learning process. Acts as a negative regulator of Ca(2+)-calmodulin-dependent protein kinase 2 (CaMK2) phosphorylation. May play a role in modulating melanin-concentrating hormone-mediated functions via its interaction with MCHR1 that interferes with G protein-coupled signal transduction. May be involved in bone metabolism. May also be involved in neurite outgrowth. This Rattus norvegicus (Rat) protein is Neurochondrin (Ncdn).